The chain runs to 354 residues: Rhodopsin (354 aa).

The Extracellular segment spans residues 1–36 (MNGTEGENFYVPMSNKTGVVRSPFDYPQYYLGEPWM). N2 and N15 each carry an N-linked (GlcNAc...) asparagine glycan. The helical transmembrane segment at 37–61 (FSALAAYMFFLILTGLPVNFLTLFV) threads the bilayer. Residues 62 to 73 (TIQHKKLRQPLN) lie on the Cytoplasmic side of the membrane. The helical transmembrane segment at 74-96 (YILLNLAVSDLFMVFGGFTTTII) threads the bilayer. The Extracellular portion of the chain corresponds to 97-110 (TSMNGYFIFGPAGC). A disulfide bridge connects residues C110 and C187. A helical membrane pass occupies residues 111-133 (NFEGFFATLGGEVGLWCLVVLAI). The 'Ionic lock' involved in activated form stabilization signature appears at 134–136 (ERY). The Cytoplasmic portion of the chain corresponds to 134–152 (ERYMVVCKPMANFRFGSQH). Residues 153-173 (AIIGVVFTWIMALSCAGPPLV) form a helical membrane-spanning segment. The Extracellular segment spans residues 174–202 (GWSRYIPEGLQCSCGVDYYTMKPEVNNES). Residues 203–224 (FVIYMFVVHFTIPLIVIFFCYG) form a helical membrane-spanning segment. The Cytoplasmic segment spans residues 225–252 (RLVCTVKEAAAQQQESESTQRAEREVTR). A helical membrane pass occupies residues 253 to 274 (MVIIMVVAFLICWVPYASVAFY). Topologically, residues 275–286 (IFINQGCDFTPF) are extracellular. The chain crosses the membrane as a helical span at residues 287–308 (FMTVPAFFAKSSAVYNPLIYIL). N6-(retinylidene)lysine is present on K296. Residues 309–354 (MNKQFRNCMITTICLGKNPFEEEESTSASASKTEASSVSSSQVAPA) are Cytoplasmic-facing. C322 is lipidated: S-palmitoyl cysteine. Residues 333–354 (STSASASKTEASSVSSSQVAPA) are disordered. Low complexity predominate over residues 334–354 (TSASASKTEASSVSSSQVAPA).

The protein belongs to the G-protein coupled receptor 1 family. Opsin subfamily. Phosphorylated on some or all of the serine and threonine residues present in the C-terminal region. In terms of processing, contains one covalently linked retinal chromophore.

Its subcellular location is the membrane. It localises to the cell projection. It is found in the cilium. The protein localises to the photoreceptor outer segment. In terms of biological role, photoreceptor required for image-forming vision at low light intensity. While most salt water fish species use retinal as chromophore, most freshwater fish use 3-dehydroretinal, or a mixture of retinal and 3-dehydroretinal. Light-induced isomerization of 11-cis to all-trans retinal triggers a conformational change that activates signaling via G-proteins. Subsequent receptor phosphorylation mediates displacement of the bound G-protein alpha subunit by arrestin and terminates signaling. This Leucoraja erinaceus (Little skate) protein is Rhodopsin (rho).